The sequence spans 487 residues: Argininosuccinate lyase (487 aa).

Belongs to the lyase 1 family. Argininosuccinate lyase subfamily.

The protein localises to the cytoplasm. It catalyses the reaction 2-(N(omega)-L-arginino)succinate = fumarate + L-arginine. The protein operates within amino-acid biosynthesis; L-arginine biosynthesis; L-arginine from L-ornithine and carbamoyl phosphate: step 3/3. The protein is Argininosuccinate lyase of Methanococcus aeolicus (strain ATCC BAA-1280 / DSM 17508 / OCM 812 / Nankai-3).